A 526-amino-acid polypeptide reads, in one-letter code: MSTTVRPDEVSSILRKQLAGFESEAEVYDVGTVLQVGDGIARVYGLSKAAAGELLEFPNKVMGMALNLEEDNVGAVLFGDSTEVKEGDTVKRTGILASVPVGEAMLGRVVNPLGVPIDGKGIIDTDIRLPLERRAPGVIYRKSVHEPLQTGLKAIDSMIPIGRGQRELIIGDRQTGKTAVALDTIINQKGKGVYCIYVAIGLKGSTVAQVVNTLEKHGAMEYTTVITATASDPAPLQFIAPFAGAALGEYFRDTGRHALVVYDDLSKQAVAYRQLSLLLRRPPGREAYPGDVFFLHSRLLERAAKITDDIEVAKKMNDLPDALRPMVQGGGSLTALPVIETQAGDVSAYIPTNVISITDGQIFLESNLFNSGQRPAINVGISVSRVGGAAQIKAMKKVAGTLRLDLAQFRELEAFSKFGSDLDKTTKAQLDRGARLVEILKQGQYVPMPVERQVAIIFLGTQGLLDLVAVQHVKKFEEEFLAMLDLKHSDILKSIAETGALEADVAGRLKEAAQKFVTTFNDKVKA.

Position 171–178 (171–178) interacts with ATP; it reads GDRQTGKT.

The protein belongs to the ATPase alpha/beta chains family. F-type ATPases have 2 components, CF(1) - the catalytic core - and CF(0) - the membrane proton channel. CF(1) has five subunits: alpha(3), beta(3), gamma(1), delta(1), epsilon(1). CF(0) has four main subunits: a(1), b(1), b'(1) and c(9-12).

Its subcellular location is the cell inner membrane. It carries out the reaction ATP + H2O + 4 H(+)(in) = ADP + phosphate + 5 H(+)(out). Its function is as follows. Produces ATP from ADP in the presence of a proton gradient across the membrane. The alpha chain is a regulatory subunit. The chain is ATP synthase subunit alpha 2 from Chlorobium luteolum (strain DSM 273 / BCRC 81028 / 2530) (Pelodictyon luteolum).